A 344-amino-acid polypeptide reads, in one-letter code: Thiamine thiazole synthase (344 aa).

Residues C90, 111 to 112 (EA), G119, and V184 each bind substrate. C232 is subject to 2,3-didehydroalanine (Cys). Residues D234, H249, M301, and 311 to 313 (RMG) contribute to the substrate site.

Belongs to the THI4 family. As to quaternary structure, homooctamer. Interacts with cyp-41. Fe cation serves as cofactor. In terms of processing, during the catalytic reaction, a sulfide is transferred from Cys-232 to a reaction intermediate, generating a dehydroalanine residue.

It localises to the cytoplasm. It is found in the nucleus. It carries out the reaction [ADP-thiazole synthase]-L-cysteine + glycine + NAD(+) = [ADP-thiazole synthase]-dehydroalanine + ADP-5-ethyl-4-methylthiazole-2-carboxylate + nicotinamide + 3 H2O + 2 H(+). Functionally, involved in biosynthesis of the thiamine precursor thiazole. Catalyzes the conversion of NAD and glycine to adenosine diphosphate 5-(2-hydroxyethyl)-4-methylthiazole-2-carboxylic acid (ADT), an adenylated thiazole intermediate. The reaction includes an iron-dependent sulfide transfer from a conserved cysteine residue of the protein to a thiazole intermediate. The enzyme can only undergo a single turnover, which suggests it is a suicide enzyme. May have additional roles in adaptation to various stress conditions and in DNA damage tolerance. The protein is Thiamine thiazole synthase of Neurospora crassa (strain ATCC 24698 / 74-OR23-1A / CBS 708.71 / DSM 1257 / FGSC 987).